The primary structure comprises 283 residues: 4-hydroxy-3-methylbut-2-enyl diphosphate reductase (283 aa).

Cys12 is a binding site for [4Fe-4S] cluster. 2 residues coordinate (2E)-4-hydroxy-3-methylbut-2-enyl diphosphate: His40 and His73. Residues His40 and His73 each contribute to the dimethylallyl diphosphate site. The isopentenyl diphosphate site is built by His40 and His73. Cys95 contributes to the [4Fe-4S] cluster binding site. His123 contacts (2E)-4-hydroxy-3-methylbut-2-enyl diphosphate. Position 123 (His123) interacts with dimethylallyl diphosphate. An isopentenyl diphosphate-binding site is contributed by His123. Residue Glu125 is the Proton donor of the active site. A (2E)-4-hydroxy-3-methylbut-2-enyl diphosphate-binding site is contributed by Thr161. [4Fe-4S] cluster is bound at residue Cys189. (2E)-4-hydroxy-3-methylbut-2-enyl diphosphate-binding residues include Ser217, Asn219, and Ser261. Dimethylallyl diphosphate is bound by residues Ser217, Asn219, and Ser261. Isopentenyl diphosphate is bound by residues Ser217, Asn219, and Ser261.

This sequence belongs to the IspH family. [4Fe-4S] cluster is required as a cofactor.

It carries out the reaction isopentenyl diphosphate + 2 oxidized [2Fe-2S]-[ferredoxin] + H2O = (2E)-4-hydroxy-3-methylbut-2-enyl diphosphate + 2 reduced [2Fe-2S]-[ferredoxin] + 2 H(+). It catalyses the reaction dimethylallyl diphosphate + 2 oxidized [2Fe-2S]-[ferredoxin] + H2O = (2E)-4-hydroxy-3-methylbut-2-enyl diphosphate + 2 reduced [2Fe-2S]-[ferredoxin] + 2 H(+). Its pathway is isoprenoid biosynthesis; dimethylallyl diphosphate biosynthesis; dimethylallyl diphosphate from (2E)-4-hydroxy-3-methylbutenyl diphosphate: step 1/1. It functions in the pathway isoprenoid biosynthesis; isopentenyl diphosphate biosynthesis via DXP pathway; isopentenyl diphosphate from 1-deoxy-D-xylulose 5-phosphate: step 6/6. Catalyzes the conversion of 1-hydroxy-2-methyl-2-(E)-butenyl 4-diphosphate (HMBPP) into a mixture of isopentenyl diphosphate (IPP) and dimethylallyl diphosphate (DMAPP). Acts in the terminal step of the DOXP/MEP pathway for isoprenoid precursor biosynthesis. The chain is 4-hydroxy-3-methylbut-2-enyl diphosphate reductase from Citrifermentans bemidjiense (strain ATCC BAA-1014 / DSM 16622 / JCM 12645 / Bem) (Geobacter bemidjiensis).